The following is a 1647-amino-acid chain: Cortactin-binding protein 2 (1647 aa).

5 disordered regions span residues 1-27, 202-222, 318-427, 440-468, and 482-604; these read MATD…AEAA, EKKK…RSTE, HVKK…QPGL, GNAN…RDNL, and LSRF…PSID. Residues 120 to 276 are a coiled coil; it reads KMQERMATQL…EQLKRGSDSK (157 aa). Residues 362-372 show a composition bias toward low complexity; the sequence is SSAPSLPPASA. The span at 379 to 388 shows a compositional bias: polar residues; it reads GPSTGSTADL. The segment covering 389–411 has biased composition (low complexity); the sequence is PSSTAPAPGSAAQSPVAAALGPA. Residues 440–466 show a composition bias toward polar residues; that stretch reads GNANDPDQNGNTTQSPPSRDVSPTSRD. An Asymmetric dimethylarginine modification is found at R484. The span at 488-509 shows a compositional bias: low complexity; it reads PAVGAAPRPGAPPTGDAGAYPP. Residues 569–579 are compositionally biased toward polar residues; the sequence is TVASPPSSLPQ. ANK repeat units lie at residues 695 to 725, 729 to 758, 762 to 791, 795 to 824, and 828 to 857; these read GRPT…DINY, DGHS…QVNA, NGFT…NINH, GGQT…DRSV, and DGWT…PAHG. The interval 856 to 886 is disordered; the sequence is HGNSLNEEEPESDVSDLDDGEESSEGESKPV. A compositionally biased stretch (acidic residues) spans 861–880; sequence NEEEPESDVSDLDDGEESSE. The stretch at 898 to 928 is one ANK 6 repeat; that stretch reads EGWTAAHIAASKGFKNCLEILCRHRGLEPER. The tract at residues 1436–1467 is disordered; it reads ENGAWRKVNTSPRRKSGRFSSPTWNKPDLSNE. S1509 is subject to Phosphoserine. Residues 1542-1647 form a disordered region; the sequence is RTFDSSGNNP…HKNEQTHRKT (106 aa). Composition is skewed to polar residues over residues 1544–1559 and 1567–1584; these read FDSS…TVNN and KEVS…SNNK. Over residues 1609-1623 the composition is skewed to low complexity; sequence SQNTKRSSSSSNTRQ. A compositionally biased stretch (basic and acidic residues) spans 1630–1647; sequence SKEENWNLHKNEQTHRKT.

As to quaternary structure, interacts with CTTN/cortactin SH3 domain. Interacts with STRN, STRN4/zinedin and MOB4/phocein; this interactions mediate the association with the STRIPAK core complex and may regulate dendritic spine distribution of the STRIPAK complex in hippocampal neurons. Activation of glutamate receptors weakens the interaction with STRN and STRN4.

It localises to the cytoplasm. It is found in the cell cortex. Its subcellular location is the cell projection. The protein resides in the dendritic spine. Its function is as follows. Regulates the dendritic spine distribution of CTTN/cortactin in hippocampal neurons, and thus controls dendritic spinogenesis and dendritic spine maintenance. Associates with the striatin-interacting phosphatase and kinase (STRIPAK) core complex to regulate dendritic spine distribution of the STRIPAK complex in hippocampal neurons. The chain is Cortactin-binding protein 2 (CTTNBP2) from Microcebus murinus (Gray mouse lemur).